The following is a 497-amino-acid chain: L-asparagine permease (497 aa).

The next 12 membrane-spanning stretches (helical) occupy residues 34–54 (QVQM…GAGA), 58–78 (MAGP…FFIL), 109–129 (VAGW…ITAV), 146–166 (VFAL…VKWF), 171–191 (FWFA…GTIF), 219–239 (LLPA…IELV), 264–284 (IGLF…WNAY), 298–318 (LGVP…ALSS), 353–373 (YAGI…NYLV), 378–398 (FEIV…FIMV), 422–442 (APFT…LMAF), and 448–468 (TYTI…WFGV).

This sequence belongs to the amino acid-polyamine-organocation (APC) superfamily. Amino acid transporter (AAT) (TC 2.A.3.1) family.

The protein resides in the cell inner membrane. The polypeptide is L-asparagine permease (ansP) (Salmonella typhimurium (strain LT2 / SGSC1412 / ATCC 700720)).